The sequence spans 609 residues: Sulfite reductase [NADPH] flavoprotein alpha-component (609 aa).

The region spanning 72-210 (ITLISASQTG…LAAQWRRQLV (139 aa)) is the Flavodoxin-like domain. FMN is bound by residues 78–83 (SQTGNA) and 125–128 (STQG). The FAD-binding FR-type domain occupies 244 to 458 (SSPLQATFAV…IEHNDNFRLP (215 aa)). Residues threonine 332, glutamine 366, 396-399 (RLYS), 414-416 (TVG), tyrosine 420, and 429-432 (GGAS) contribute to the FAD site. NADP(+) is bound by residues 529–530 (SR), 535–539 (KIYVQ), and aspartate 571. An FAD-binding site is contributed by tyrosine 609.

It belongs to the NADPH-dependent sulphite reductase flavoprotein subunit CysJ family. In the N-terminal section; belongs to the flavodoxin family. The protein in the C-terminal section; belongs to the flavoprotein pyridine nucleotide cytochrome reductase family. Alpha(8)-beta(8). The alpha component is a flavoprotein, the beta component is a hemoprotein. FAD is required as a cofactor. Requires FMN as cofactor.

It carries out the reaction hydrogen sulfide + 3 NADP(+) + 3 H2O = sulfite + 3 NADPH + 4 H(+). Its pathway is sulfur metabolism; hydrogen sulfide biosynthesis; hydrogen sulfide from sulfite (NADPH route): step 1/1. Component of the sulfite reductase complex that catalyzes the 6-electron reduction of sulfite to sulfide. This is one of several activities required for the biosynthesis of L-cysteine from sulfate. The flavoprotein component catalyzes the electron flow from NADPH -&gt; FAD -&gt; FMN to the hemoprotein component. The sequence is that of Sulfite reductase [NADPH] flavoprotein alpha-component from Pectobacterium atrosepticum (strain SCRI 1043 / ATCC BAA-672) (Erwinia carotovora subsp. atroseptica).